Here is a 341-residue protein sequence, read N- to C-terminus: Zinc transporter 6, chloroplastic (341 aa).

A helical membrane pass occupies residues 28 to 48; it reads IVAVFAIFLTSVFGVWGPVLL. Topologically, residues 49–61 are cytoplasmic; sequence AKYFHGKPLYDKA. A helical membrane pass occupies residues 62–82; it reads ILVIKCFAAGVILSTSLVHVL. The Lumenal portion of the chain corresponds to 83 to 102; sequence PEAFESLADCQVSSRHPWKD. The chain crosses the membrane as a helical span at residues 103-123; that stretch reads FPFAGLVTMIGAITALLVDLT. The Cytoplasmic portion of the chain corresponds to 124 to 179; it reads ASEHMGHGGGGGGDGGMEYMPVGKAVGGLEMKEGKCGADLEIQENSEEEIVKMKQR. A helical transmembrane segment spans residues 180–200; the sequence is LVSQVLEIGIIFHSVIIGVTM. The Lumenal segment spans residues 201–211; the sequence is GMSQNKCTIRP. Residues 212–232 traverse the membrane as a helical segment; the sequence is LIAALSFHQIFEGLGLGGCIA. The Cytoplasmic segment spans residues 233-243; sequence QAGFKAGTVVY. Residues 244–264 traverse the membrane as a helical segment; it reads MCLMFAVTTPLGIVLGMVIFA. The Lumenal segment spans residues 265–280; it reads ATGYDDQNPNALIMEG. The chain crosses the membrane as a helical span at residues 281–301; sequence LLGSFSSGILIYMALVDLIAL. Topologically, residues 302 to 320 are cytoplasmic; sequence DFFHNKMLTTCGESGSRLK. The helical transmembrane segment at 321 to 341 threads the bilayer; the sequence is KLCFVALVLGSASMSLLALWA.

Belongs to the ZIP transporter (TC 2.A.5) family.

The protein localises to the plastid. It is found in the chloroplast thylakoid membrane. Its function is as follows. May play a role in the transport of zinc in the plastids. The sequence is that of Zinc transporter 6, chloroplastic (ZIP6) from Arabidopsis thaliana (Mouse-ear cress).